A 193-amino-acid chain; its full sequence is Peptidyl-tRNA hydrolase (193 aa).

Tyr15 lines the tRNA pocket. His20 serves as the catalytic Proton acceptor. Phe65, Asn67, and Asn113 together coordinate tRNA.

It belongs to the PTH family. In terms of assembly, monomer.

The protein resides in the cytoplasm. It catalyses the reaction an N-acyl-L-alpha-aminoacyl-tRNA + H2O = an N-acyl-L-amino acid + a tRNA + H(+). Hydrolyzes ribosome-free peptidyl-tRNAs (with 1 or more amino acids incorporated), which drop off the ribosome during protein synthesis, or as a result of ribosome stalling. In terms of biological role, catalyzes the release of premature peptidyl moieties from peptidyl-tRNA molecules trapped in stalled 50S ribosomal subunits, and thus maintains levels of free tRNAs and 50S ribosomes. The sequence is that of Peptidyl-tRNA hydrolase from Ehrlichia ruminantium (strain Welgevonden).